The primary structure comprises 64 residues: Small, acid-soluble spore protein beta (64 aa).

Belongs to the alpha/beta-type SASP family.

In terms of biological role, SASP are bound to spore DNA. They are double-stranded DNA-binding proteins that cause DNA to change to an a-like conformation. They protect the DNA backbone from chemical and enzymatic cleavage and are thus involved in dormant spore's high resistance to UV light. This is Small, acid-soluble spore protein beta from Paraclostridium bifermentans (Clostridium bifermentans).